We begin with the raw amino-acid sequence, 93 residues long: uncharacterized protein (93 aa).

This is an uncharacterized protein from Methanocaldococcus jannaschii (strain ATCC 43067 / DSM 2661 / JAL-1 / JCM 10045 / NBRC 100440) (Methanococcus jannaschii).